A 227-amino-acid polypeptide reads, in one-letter code: PKHD-type hydroxylase ABSDF3031 (227 aa).

A Fe2OG dioxygenase domain is found at 78–178 (KIIPPLFNRY…RFASFFWVQS (101 aa)). 3 residues coordinate Fe cation: His96, Asp98, and His159. A 2-oxoglutarate-binding site is contributed by Arg169.

Requires Fe(2+) as cofactor. The cofactor is L-ascorbate.

The chain is PKHD-type hydroxylase ABSDF3031 from Acinetobacter baumannii (strain SDF).